A 314-amino-acid chain; its full sequence is MTMTDTTQQDKKHTYNFNKLQKRLRRNVGNAIADFNMIEEGDKVMVCLSGGKDSYTLLDILLNLRLNAPIHFEIVAVNLDQKQPGFPEHILPEYLQSIGVDYKIVEENTYGIVKEKIPEGKTTCSLCSRLRRGILYRTATELGATKIALGHHRDDMLETLFLNMFYGGKLKSMPPKLISDDGKQIVIRPLAYCKEKDIEKYAQAKHFPIIPCNLCGSQPNLQRQVVKEMLQKWDRQYPGRIETMFSAIQNIVPSHLCDTHLFNFKDLQRGQILENIEGDIAFDKPEFIATSPIDDDDEQQDFHQVELINVKEIH.

The PP-loop motif signature appears at S49–S54. [4Fe-4S] cluster contacts are provided by C124, C127, and C215.

Belongs to the TtcA family. In terms of assembly, homodimer. Mg(2+) is required as a cofactor. The cofactor is [4Fe-4S] cluster.

Its subcellular location is the cytoplasm. The catalysed reaction is cytidine(32) in tRNA + S-sulfanyl-L-cysteinyl-[cysteine desulfurase] + AH2 + ATP = 2-thiocytidine(32) in tRNA + L-cysteinyl-[cysteine desulfurase] + A + AMP + diphosphate + H(+). It functions in the pathway tRNA modification. In terms of biological role, catalyzes the ATP-dependent 2-thiolation of cytidine in position 32 of tRNA, to form 2-thiocytidine (s(2)C32). The sulfur atoms are provided by the cysteine/cysteine desulfurase (IscS) system. The chain is tRNA-cytidine(32) 2-sulfurtransferase from Pasteurella multocida (strain Pm70).